A 165-amino-acid polypeptide reads, in one-letter code: Nucleotide-binding protein Ccon26_01810 (165 aa).

It belongs to the YajQ family.

Nucleotide-binding protein. This Campylobacter concisus (strain 13826) protein is Nucleotide-binding protein Ccon26_01810.